Consider the following 383-residue polypeptide: Chitinase-3-like protein 1 (383 aa).

The signal sequence occupies residues 1–21 (MGLRASGTGFVVLVLLQSCAA). In terms of domain architecture, GH18 spans 22-383 (YKLICYYTSW…SAVKDVLAEV (362 aa)). Cysteines 26 and 51 form a disulfide. A glycan (N-linked (GlcNAc...) asparagine) is linked at Asn60. Residues 70-71 (EW), 97-100 (GGWN), Tyr141, 204-207 (LTYD), and Arg263 contribute to the chitin site. A disulfide bridge connects residues Cys300 and Cys364. Residues 324-338 (QWVAYDDQESVKNKA) are important for AKT1 activation and IL8 production. Trp352 serves as a coordination point for chitin. A glycan (N-linked (GlcNAc...) asparagine) is linked at Asn367.

The protein belongs to the glycosyl hydrolase 18 family. Monomer.

The protein resides in the secreted. It localises to the extracellular space. It is found in the cytoplasm. Its subcellular location is the perinuclear region. The protein localises to the endoplasmic reticulum. Functionally, carbohydrate-binding lectin with a preference for chitin. Has no chitinase activity. May play a role in tissue remodeling and in the capacity of cells to respond to and cope with changes in their environment. Plays a role in T-helper cell type 2 (Th2) inflammatory response and IL-13-induced inflammation, regulating allergen sensitization, inflammatory cell apoptosis, dendritic cell accumulation and M2 macrophage differentiation. Facilitates invasion of pathogenic enteric bacteria into colonic mucosa and lymphoid organs. Mediates activation of AKT1 signaling pathway and subsequent IL8 production in colonic epithelial cells. Regulates antibacterial responses in lung by contributing to macrophage bacterial killing, controlling bacterial dissemination and augmenting host tolerance. Also regulates hyperoxia-induced injury, inflammation and epithelial apoptosis in lung. The chain is Chitinase-3-like protein 1 (CHI3L1) from Capra hircus (Goat).